We begin with the raw amino-acid sequence, 99 residues long: Protein Tat (99 aa).

Residues methionine 1–threonine 20 are disordered. The tract at residues methionine 1–glutamine 24 is interaction with human CREBBP. Residues methionine 1 to glycine 48 are transactivation. Zn(2+) is bound by residues cysteine 22, cysteine 25, and cysteine 27. Positions cysteine 22–cysteine 37 are cysteine-rich. Lysine 28 bears the N6-acetyllysine; by host PCAF mark. Zn(2+) is bound by residues cysteine 30, histidine 33, cysteine 34, and cysteine 37. The tract at residues phenylalanine 38–glycine 48 is core. The Nuclear localization signal, RNA-binding (TAR), and protein transduction signature appears at arginine 49–threonine 57. The interval arginine 49 to glutamate 86 is interaction with the host capping enzyme RNGTT. Lysine 51 carries the N6-acetyllysine; by host EP300 and GCN5L2 modification. Arginine 52 and arginine 53 each carry asymmetric dimethylarginine; by host PRMT6. Positions glutamine 54–proline 99 are disordered. Residue lysine 71 forms a Glycyl lysine isopeptide (Lys-Gly) (interchain with G-Cter in ubiquitin) linkage. The short motif at arginine 78–aspartate 80 is the Cell attachment site element. Residues glycine 83–proline 99 are compositionally biased toward basic and acidic residues.

The protein belongs to the lentiviruses Tat family. Interacts with host CCNT1. Associates with the P-TEFb complex composed at least of Tat, P-TEFb (CDK9 and CCNT1), TAR RNA, RNA Pol II. Recruits the HATs CREBBP, TAF1/TFIID, EP300, PCAF and GCN5L2. Interacts with host KAT5/Tip60; this interaction targets the latter to degradation. Interacts with the host deacetylase SIRT1. Interacts with host capping enzyme RNGTT; this interaction stimulates RNGTT. Binds to host KDR, and to the host integrins ITGAV/ITGB3 and ITGA5/ITGB1. Interacts with host KPNB1/importin beta-1 without previous binding to KPNA1/importin alpha-1. Interacts with EIF2AK2. Interacts with host nucleosome assembly protein NAP1L1; this interaction may be required for the transport of Tat within the nucleus, since the two proteins interact at the nuclear rim. Interacts with host C1QBP/SF2P32; this interaction involves lysine-acetylated Tat. Interacts with the host chemokine receptors CCR2, CCR3 and CXCR4. Interacts with host DPP4/CD26; this interaction may trigger an anti-proliferative effect. Interacts with host LDLR. Interacts with the host extracellular matrix metalloproteinase MMP1. Interacts with host PRMT6; this interaction mediates Tat's methylation. Interacts with, and is ubiquitinated by MDM2/Hdm2. Interacts with host PSMC3 and HTATIP2. Interacts with STAB1; this interaction may overcome SATB1-mediated repression of IL2 and IL2RA (interleukin) in T cells by binding to the same domain than HDAC1. Interacts (when acetylated) with human CDK13, thereby increasing HIV-1 mRNA splicing and promoting the production of the doubly spliced HIV-1 protein Nef. Interacts with host TBP; this interaction modulates the activity of transcriptional pre-initiation complex. Interacts with host RELA. Interacts with host PLSCR1; this interaction negatively regulates Tat transactivation activity by altering its subcellular distribution. Post-translationally, asymmetrical arginine methylation by host PRMT6 seems to diminish the transactivation capacity of Tat and affects the interaction with host CCNT1. Acetylation by EP300, CREBBP, GCN5L2/GCN5 and PCAF regulates the transactivation activity of Tat. EP300-mediated acetylation of Lys-50 promotes dissociation of Tat from the TAR RNA through the competitive binding to PCAF's bromodomain. In addition, the non-acetylated Tat's N-terminus can also interact with PCAF. PCAF-mediated acetylation of Lys-28 enhances Tat's binding to CCNT1. Lys-50 is deacetylated by SIRT1. In terms of processing, polyubiquitination by host MDM2 does not target Tat to degradation, but activates its transactivation function and fosters interaction with CCNT1 and TAR RNA. Post-translationally, phosphorylated by EIF2AK2 on serine and threonine residues adjacent to the basic region important for TAR RNA binding and function. Phosphorylation of Tat by EIF2AK2 is dependent on the prior activation of EIF2AK2 by dsRNA.

It is found in the host nucleus. Its subcellular location is the host nucleolus. The protein resides in the host cytoplasm. It localises to the secreted. Functionally, transcriptional activator that increases RNA Pol II processivity, thereby increasing the level of full-length viral transcripts. Recognizes a hairpin structure at the 5'-LTR of the nascent viral mRNAs referred to as the transactivation responsive RNA element (TAR) and recruits the cyclin T1-CDK9 complex (P-TEFb complex) that will in turn hyperphosphorylate the RNA polymerase II to allow efficient elongation. The CDK9 component of P-TEFb and other Tat-activated kinases hyperphosphorylate the C-terminus of RNA Pol II that becomes stabilized and much more processive. Other factors such as HTATSF1/Tat-SF1, SUPT5H/SPT5, and HTATIP2 are also important for Tat's function. Besides its effect on RNA Pol II processivity, Tat induces chromatin remodeling of proviral genes by recruiting the histone acetyltransferases (HATs) CREBBP, EP300 and PCAF to the chromatin. This also contributes to the increase in proviral transcription rate, especially when the provirus integrates in transcriptionally silent region of the host genome. To ensure maximal activation of the LTR, Tat mediates nuclear translocation of NF-kappa-B by interacting with host RELA. Through its interaction with host TBP, Tat may also modulate transcription initiation. Tat can reactivate a latently infected cell by penetrating in it and transactivating its LTR promoter. In the cytoplasm, Tat is thought to act as a translational activator of HIV-1 mRNAs. Extracellular circulating Tat can be endocytosed by surrounding uninfected cells via the binding to several surface receptors such as CD26, CXCR4, heparan sulfate proteoglycans (HSPG) or LDLR. Neurons are rarely infected, but they internalize Tat via their LDLR. Through its interaction with nuclear HATs, Tat is potentially able to control the acetylation-dependent cellular gene expression. Modulates the expression of many cellular genes involved in cell survival, proliferation or in coding for cytokines or cytokine receptors. Tat plays a role in T-cell and neurons apoptosis. Tat induced neurotoxicity and apoptosis probably contribute to neuroAIDS. Circulating Tat also acts as a chemokine-like and/or growth factor-like molecule that binds to specific receptors on the surface of the cells, affecting many cellular pathways. In the vascular system, Tat binds to ITGAV/ITGB3 and ITGA5/ITGB1 integrins dimers at the surface of endothelial cells and competes with bFGF for heparin-binding sites, leading to an excess of soluble bFGF. The polypeptide is Protein Tat (Homo sapiens (Human)).